The following is a 304-amino-acid chain: Phosphoribosylaminoimidazole-succinocarboxamide synthase (304 aa).

The protein belongs to the SAICAR synthetase family.

The enzyme catalyses 5-amino-1-(5-phospho-D-ribosyl)imidazole-4-carboxylate + L-aspartate + ATP = (2S)-2-[5-amino-1-(5-phospho-beta-D-ribosyl)imidazole-4-carboxamido]succinate + ADP + phosphate + 2 H(+). It functions in the pathway purine metabolism; IMP biosynthesis via de novo pathway; 5-amino-1-(5-phospho-D-ribosyl)imidazole-4-carboxamide from 5-amino-1-(5-phospho-D-ribosyl)imidazole-4-carboxylate: step 1/2. The protein is Phosphoribosylaminoimidazole-succinocarboxamide synthase of Streptomyces griseus subsp. griseus (strain JCM 4626 / CBS 651.72 / NBRC 13350 / KCC S-0626 / ISP 5235).